The chain runs to 449 residues: MFKTLTQNLMKIFDRLVSSGLLTEEQIDAALRDIRVALLESDVALPVIKNFVAEVKQKALGQEVIKSVSPGQMIIKIIHEEMINILSSSEDEIKLNLNAKPPVNLLMVGLQGSGKTTASGKLALCLKNQNKKVLLVSLDTYRPAAQEQLEILANSVKINSLPIVKGEKPLDIVKRAMAEAKLSAYDIVIYDTAGRTQIDQEMMNEAIAIKKIVEPTETLLVIDSMTGQDAVVTASSFNEQLEISGLILSRIDGDSKGGAALSVKYITQRPIKFLSSGEKLTDLEEFDAKRIASRILDMGDIISFVEKAASIVDREQAEKTAAKLKKGKFDLNDYLQQMKSIKKIGGFGSILSMLPGSGKIMDQIDQSKLNSKIIEHQEAIILSMTPKERRNPDIINASRRKRIALGAGTTVQKVNILLKQFKQISDMMKKASNMNPKNLLRSGLGKLFS.

GTP is bound by residues 109–116 (GLQGSGKT), 191–195 (DTAGR), and 249–252 (SRID).

Belongs to the GTP-binding SRP family. SRP54 subfamily. In terms of assembly, part of the signal recognition particle protein translocation system, which is composed of SRP and FtsY. SRP is a ribonucleoprotein composed of Ffh and a 4.5S RNA molecule.

The protein resides in the cytoplasm. The catalysed reaction is GTP + H2O = GDP + phosphate + H(+). Functionally, involved in targeting and insertion of nascent membrane proteins into the cytoplasmic membrane. Binds to the hydrophobic signal sequence of the ribosome-nascent chain (RNC) as it emerges from the ribosomes. The SRP-RNC complex is then targeted to the cytoplasmic membrane where it interacts with the SRP receptor FtsY. Interaction with FtsY leads to the transfer of the RNC complex to the Sec translocase for insertion into the membrane, the hydrolysis of GTP by both Ffh and FtsY, and the dissociation of the SRP-FtsY complex into the individual components. In Rickettsia bellii (strain RML369-C), this protein is Signal recognition particle protein.